A 681-amino-acid polypeptide reads, in one-letter code: PWWP domain-containing DNA repair factor 3B (681 aa).

Positions 102–121 (NLSQESMSEEQPTATASENV) are enriched in polar residues. Disordered regions lie at residues 102 to 144 (NLSQ…TQED), 166 to 200 (HTTG…DDKK), and 285 to 304 (QNQS…AGCS). S128 carries the phosphoserine modification. Over residues 285 to 302 (QNQSSVESDVGAETSTAG) the composition is skewed to polar residues. One can recognise a PWWP domain in the interval 377 to 438 (TGMIVWFKYQ…KKYDCKEKQA (62 aa)).

Belongs to the PWWP3A family.

This chain is PWWP domain-containing DNA repair factor 3B (Pwwp3b), found in Mus musculus (Mouse).